Reading from the N-terminus, the 253-residue chain is uncharacterized protein (253 aa).

EamA domains lie at 1-97 and 116-237; these read MFFM…IYSL and FFWA…ISRL. Transmembrane regions (helical) follow at residues 2 to 22, 28 to 48, 53 to 73, 80 to 100, 101 to 121, 138 to 158, 162 to 182, and 214 to 234; these read FFMALRFLIGGIILLPFAKQL, IFLLSIFTTLSTSFWAYGLLY, ESAVLSYTMPLIAIPLSTLIL, TEVIGILIGFSGVVIYSLNLG, IYFSLIGIVLTLINAFFWALF, AVQLLLGSLIFFTLSPIQFYF, INFLVDLLYVSVLGGGISFYL, and GVNVNIGMIEGIGVMFLGILI.

Belongs to the EamA transporter family.

It is found in the cell membrane. This is an uncharacterized protein from Acidianus ambivalens (Desulfurolobus ambivalens).